The sequence spans 587 residues: MERLMRLTILLFLGAVLAGCASVPSTSAPQAIGTVERPVPSNLPKPSPGMDPDVLLREFLKATADPANRHLAARQFLTESASNAWDDAGSALLIDHVVFVETRSAEKVSVTMRADILGSLSDVGVFETAEGQLPDPGPIELVKTSDGWRIDRLPNGVFLDWQQFQETYKRNTLYFADPTGKTVVPDPRYVAVSDRDQLATELVSKLLAGPRPEMARTVRNLLAPPLRLRGPVTRADGGKSGIGRGYGGARVDMEKLSTTDPHSRQLLAAQIIWTLARADIRGPYVINADGAPLEDRFAEGWTTSDVAATDPGVADGAAAGLHALVNGSLVAMDAQRVTPVPGAFGRMPEQTAAAVSRSGRQVASVVTLGRGAPDEAASLWVGDLGGEAVQSADGHSLSRPSWSLDDAVWVVVDTNVVLRAIQDPASGQPARIPVDSTAVASRFPGAINDLQLSRDGTRAAMVIGGQVILAGVEQTQAGQFALTYPRRLGFGLGSSVVSLSWRTGDDIVVTRTDAAHPVSYVNLDGVNSDAPSRGLQTPLTAIAANPSTVYVAGPQGVLMYSASVESRPGWADVPGLMVPGAAPVLPG.

Residues 1–19 form the signal peptide; sequence MERLMRLTILLFLGAVLAG. C20 carries the N-palmitoyl cysteine lipid modification. A lipid anchor (S-diacylglycerol cysteine) is attached at C20.

This sequence belongs to the LpqB lipoprotein family. In terms of assembly, interacts with MtrB, probably extracytoplasmically.

The protein localises to the cell membrane. The protein resides in the secreted. Its subcellular location is the cell wall. In terms of biological role, may modulate activity of the MtrAB system in controlling homeostasis of the cell wall and cell division. This Mycobacterium tuberculosis (strain CDC 1551 / Oshkosh) protein is Lipoprotein LpqB.